The following is a 351-amino-acid chain: MSGLIAYCRQGFEPELAAELRDRAVLLGIASDIHAQRNHGFVLLRCDPLHVDTLLQQLHWRRLIFARQTLRLHAELKTLNSRDRIAPILAALPKTPCFGDLWIEYPDSDMGKPLAGLARSFGNALRPVLRSAGRLSAQLHPQWPRLHVCFLSGDHVLLGSTRSVDSAPWQLGIPRLKLLPEAPSRSALKLEEALITLLTPNEREAKLRPGMCATDLGAAPGGWTWVLICQHLRVTSIDNAALRPPLLNHPLVQHVRADGFRWIPPRPMDWMVCDMVEQPRRVAERMAVWLREGWCRHMIFNLKLPMKKRWDETRLCLERFETQAAVPLTLRAKQLYHDREEITVYASNDAR.

Residues Ser-186, Ala-219–Gly-222, Asp-238, Asp-258, and Asp-274 each bind S-adenosyl-L-methionine. Catalysis depends on Lys-303, which acts as the Proton acceptor.

It belongs to the class I-like SAM-binding methyltransferase superfamily. RNA methyltransferase RlmE family. RlmM subfamily. As to quaternary structure, monomer.

It is found in the cytoplasm. It carries out the reaction cytidine(2498) in 23S rRNA + S-adenosyl-L-methionine = 2'-O-methylcytidine(2498) in 23S rRNA + S-adenosyl-L-homocysteine + H(+). Its function is as follows. Catalyzes the 2'-O-methylation at nucleotide C2498 in 23S rRNA. The polypeptide is Ribosomal RNA large subunit methyltransferase M (Xylella fastidiosa (strain M23)).